Consider the following 103-residue polypeptide: Large ribosomal subunit protein bL21 (103 aa).

Belongs to the bacterial ribosomal protein bL21 family. Part of the 50S ribosomal subunit. Contacts protein L20.

Functionally, this protein binds to 23S rRNA in the presence of protein L20. The chain is Large ribosomal subunit protein bL21 from Pseudomonas aeruginosa (strain LESB58).